The following is a 324-amino-acid chain: tRNA-modifying protein YgfZ (324 aa).

Position 186 (Trp-186) interacts with folate.

This sequence belongs to the tRNA-modifying YgfZ family.

The protein localises to the cytoplasm. In terms of biological role, folate-binding protein involved in regulating the level of ATP-DnaA and in the modification of some tRNAs. It is probably a key factor in regulatory networks that act via tRNA modification, such as initiation of chromosomal replication. This is tRNA-modifying protein YgfZ from Colwellia psychrerythraea (strain 34H / ATCC BAA-681) (Vibrio psychroerythus).